Consider the following 214-residue polypeptide: Triosephosphate isomerase (214 aa).

Asn6–Lys8 is a substrate binding site. The active-site Electrophile is the His85. Catalysis depends on Glu133, which acts as the Proton acceptor. Substrate-binding positions include Ile138, Gly173, and Ala194–Ser195.

Belongs to the triosephosphate isomerase family. As to quaternary structure, homotetramer; dimer of dimers.

It is found in the cytoplasm. The enzyme catalyses D-glyceraldehyde 3-phosphate = dihydroxyacetone phosphate. Its pathway is carbohydrate biosynthesis; gluconeogenesis. It participates in carbohydrate degradation; glycolysis; D-glyceraldehyde 3-phosphate from glycerone phosphate: step 1/1. In terms of biological role, involved in the gluconeogenesis. Catalyzes stereospecifically the conversion of dihydroxyacetone phosphate (DHAP) to D-glyceraldehyde-3-phosphate (G3P). This is Triosephosphate isomerase from Halobacterium salinarum (strain ATCC 700922 / JCM 11081 / NRC-1) (Halobacterium halobium).